Here is a 622-residue protein sequence, read N- to C-terminus: Sodium/potassium/calcium exchanger 4 (622 aa).

Residues 1–38 (MALRGTLRPLKVRRRREMLPQQVGFVCAVLALVCCASG) form the signal peptide. The Extracellular portion of the chain corresponds to 39-97 (LFGSLGHKTASASKRVLPDTWRNRKLMAPVNGTQTAKNCTDPAIHEFPTDLFSNKERQH). N-linked (GlcNAc...) asparagine glycans are attached at residues asparagine 69 and asparagine 76. A helical transmembrane segment spans residues 98 to 118 (GAVLLHILGALYMFYALAIVC). Topologically, residues 119 to 142 (DDFFVPSLEKICERLHLSEDVAGA) are cytoplasmic. Residues 139–179 (VAGATFMAAGSSTPELFASVIGVFITHGDVGVGTIVGSAVF) form an Alpha-1 repeat. The helical transmembrane segment at 143 to 163 (TFMAAGSSTPELFASVIGVFI) threads the bilayer. Residues 164 to 172 (THGDVGVGT) are Extracellular-facing. Residues 173-193 (IVGSAVFNILCIIGVCGLFAG) traverse the membrane as a helical segment. Over 194 to 200 (QVVRLTW) the chain is Cytoplasmic. The helical transmembrane segment at 201–221 (WAVCRDSVYYTISVIVLIVFI) threads the bilayer. Over 222-224 (YDE) the chain is Extracellular. The chain crosses the membrane as a helical span at residues 225 to 245 (QIVWWEGLVLIILYVFYILIM). Residues 246–457 (KYNVKMQAFF…RWEKFFMVTF (212 aa)) are Cytoplasmic-facing. The interval 358-410 (ANGVSSKPLQNGRHENIENGNVPVENPEDPQQNQEQQPPPQPPPPEPEPVEAD) is disordered. Low complexity predominate over residues 380-393 (PVENPEDPQQNQEQ). Positions 394 to 404 (QPPPQPPPPEP) are enriched in pro residues. A helical membrane pass occupies residues 458-478 (ITATLWIAVFSYIMVWLVTII). Position 479 (glycine 479) is a topological domain, extracellular. Residues 480-500 (YTLGIPDVIMGITFLAAGTSV) traverse the membrane as a helical segment. The Alpha-2 repeat unit spans residues 495–526 (AAGTSVPDCMASLIVARQGLGDMAVSNTIGSN). Over 501 to 526 (PDCMASLIVARQGLGDMAVSNTIGSN) the chain is Cytoplasmic. The chain crosses the membrane as a helical span at residues 527–547 (VFDILVGLGVPWGLQTMVVNY). Residues 548-557 (GSTVKINSRG) lie on the Extracellular side of the membrane. A helical membrane pass occupies residues 558–578 (LVYSVVLLLGSVALTVLGIHL). Over 579-586 (NKWRLDRK) the chain is Cytoplasmic. The chain crosses the membrane as a helical span at residues 587 to 607 (LGVYVLVLYAIFLCFSIMIEF). The Extracellular portion of the chain corresponds to 608 to 622 (NVFTFVNLPMCREDD).

Belongs to the Ca(2+):cation antiporter (CaCA) (TC 2.A.19) family. SLC24A subfamily. As to expression, expressed abundantly in all regions of the brain, aorta, lung and thymus. Expressed at lower levels in the stomach and intestine.

It is found in the cell membrane. Its subcellular location is the cytoplasm. The catalysed reaction is Ca(2+)(out) + K(+)(out) + 4 Na(+)(in) = Ca(2+)(in) + K(+)(in) + 4 Na(+)(out). Its function is as follows. Calcium, potassium:sodium antiporter that transports 1 Ca(2+) and 1 K(+) in exchange for 4 Na(+). Controls the rapid response termination and proper regulation of adaptation in olfactory sensory neurons (OSNs) which subsequently influences how odor information is encoded and perceived. May play a role in calcium transport during amelogenesis. This Homo sapiens (Human) protein is Sodium/potassium/calcium exchanger 4.